The chain runs to 387 residues: Zinc transporter 7 (387 aa).

The Cytoplasmic segment spans residues 1–37 (MLPLSIKDDEYKPAKFNLVVKLSGWFRSILADKTSRN). A helical transmembrane segment spans residues 38 to 58 (LFFFLCLNLSFAFVELLYGIW). At 59–67 (SNSLGLISD) the chain is on the lumenal side. A helical transmembrane segment spans residues 68 to 88 (SFHMFFDCTALLAGLAASVIS). The Cytoplasmic portion of the chain corresponds to 89-102 (RWRSNDSFSYGYVR). Residues 103-123 (AEVLAGFVNGLFLIFTAFFIF) form a helical membrane-spanning segment. At 124 to 140 (SEGVERALEPPDVHHDR) the chain is on the lumenal side. The helical transmembrane segment at 141–161 (LLPVSIAGLLVNLVGIFVFQH) threads the bilayer. The tract at residues 161–232 (HGGHGHSHGG…HDDQHCHDDH (72 aa)) is his-rich loop. Residues 162–247 (GGHGHSHGGD…KGSSKQILQG (86 aa)) lie on the Cytoplasmic side of the membrane. The segment at 167–237 (SHGGDDHGHS…CHDDHTLTPG (71 aa)) is disordered. The segment covering 187–201 (GHSHGGHGHSHGGHG) has biased composition (basic residues). Composition is skewed to basic and acidic residues over residues 202–214 (HSHESKHGHDHGH) and 221–233 (HSHDDQHCHDDHT). The helical transmembrane segment at 248–268 (VFLHIVADTLGSVGVIISAIL) threads the bilayer. At 269 to 273 (MQKYD) the chain is on the lumenal side. A helical transmembrane segment spans residues 274–294 (LMIADPICSMLIALLIGVSVV). Residues 295–387 (PLLRESIGIL…LYVQIEVAAM (93 aa)) are Cytoplasmic-facing.

The protein belongs to the cation diffusion facilitator (CDF) transporter (TC 2.A.4) family. SLC30A subfamily. In terms of assembly, homooligomer.

It localises to the golgi apparatus membrane. Its subcellular location is the cytoplasmic vesicle. The protein localises to the golgi apparatus. It is found in the trans-Golgi network. The protein resides in the sarcoplasmic reticulum. It localises to the mitochondrion. It catalyses the reaction Zn(2+)(in) = Zn(2+)(out). Its function is as follows. Zinc ion transporter mediating zinc entry from the cytosol into the lumen of organelles along the secretory pathway. By contributing to zinc ion homeostasis within the early secretory pathway, regulates the activation and folding of enzymes like alkaline phosphatases. The sequence is that of Zinc transporter 7 (slc30a7) from Danio rerio (Zebrafish).